Reading from the N-terminus, the 239-residue chain is MPKSCAARQCCNRYSNRRKQLTFHRFPFSRPELLKEWVLNIGRGDFEPKQHTVICSEHFRPECFSAFGNRKNLKHNAVPTVFAFQGPPQLVRENTDPTGRSGDATSGERKVLPETGSGECGLGRKMDTTVEVLQLPPEVGGLGAQVPPHTPETSGVPGQPASPPELKRRLPTQPSDHSYALLDLDTLKKKLFLTLKENEKLRRRLKAQRLVMRRMCSRLRARLAGRPGLQARPRLGQQS.

The THAP-type zinc finger occupies 1-82; it reads MPKSCAARQC…LKHNAVPTVF (82 aa). Disordered stretches follow at residues 88–125 and 139–174; these read PQLV…LGRK and VGGL…PTQP. Residues 176 to 179 carry the HCFC1-binding motif (HBM) motif; that stretch reads DHSY.

In terms of assembly, component of a THAP1/THAP3-HCFC1-OGT complex that contains at least, either THAP1 or THAP3, HCFC1 and OGT. Interacts directly with OGT and HCFC1 (via its HBM).

Functionally, component of a THAP1/THAP3-HCFC1-OGT complex that is required for the regulation of the transcriptional activity of RRM1. The chain is THAP domain-containing protein 3 (THAP3) from Bos taurus (Bovine).